The chain runs to 394 residues: Cytohesin-4 (394 aa).

Residues 12–65 (SSGETEELQRIKWHRKQLLEDIQKLKDEIADVFAQIDCFESAEESRMAQKEKEL) are a coiled coil. Residues 54–241 (EESRMAQKEK…RNLFDSIKSE (188 aa)) enclose the SEC7 domain. One can recognise a PH domain in the interval 259-375 (NPDREGWLLK…WIESIRASIT (117 aa)). A 1,2-diacyl-sn-glycero-3-phospho-(1D-myo-inositol-3,4,5-trisphosphate) contacts are provided by residues 268 to 275 (KLGGRVKT), Arg-279, Tyr-290, and Arg-300. Positions 386–394 (RKKKIASKQ) are C-terminal autoinhibitory region.

In terms of tissue distribution, expressed predominantly in peripheral blood leukocytes.

Its subcellular location is the cell membrane. Functionally, promotes guanine-nucleotide exchange on ARF1 and ARF5. Promotes the activation of ARF factors through replacement of GDP with GTP. This is Cytohesin-4 (CYTH4) from Homo sapiens (Human).